The chain runs to 259 residues: Putative cysteine-rich repeat secretory protein 25 (259 aa).

The signal sequence occupies residues 1-31 (MSSSFLSRPLVSVYVFAMVTMQLLFMQSVLS). Gnk2-homologous domains lie at 37-138 (AYLN…SIYT) and 144-256 (YRHI…LYPF).

The protein belongs to the cysteine-rich repeat secretory protein family.

The protein resides in the secreted. This is Putative cysteine-rich repeat secretory protein 25 (CRRSP25) from Arabidopsis thaliana (Mouse-ear cress).